We begin with the raw amino-acid sequence, 205 residues long: Dephospho-CoA kinase (205 aa).

In terms of domain architecture, DPCK spans 5 to 201 (VVGLTGGIGS…QRYLQLSGNH (197 aa)). ATP is bound at residue 13-18 (GSGKTT).

This sequence belongs to the CoaE family.

The protein localises to the cytoplasm. The enzyme catalyses 3'-dephospho-CoA + ATP = ADP + CoA + H(+). It functions in the pathway cofactor biosynthesis; coenzyme A biosynthesis; CoA from (R)-pantothenate: step 5/5. Catalyzes the phosphorylation of the 3'-hydroxyl group of dephosphocoenzyme A to form coenzyme A. The sequence is that of Dephospho-CoA kinase from Shewanella oneidensis (strain ATCC 700550 / JCM 31522 / CIP 106686 / LMG 19005 / NCIMB 14063 / MR-1).